The primary structure comprises 421 residues: Serine--tRNA ligase (421 aa).

An L-serine-binding site is contributed by 227 to 229 (TSE). ATP contacts are provided by residues 257-259 (RRE) and V273. E280 contributes to the L-serine binding site. An ATP-binding site is contributed by 344-347 (ELTS). An L-serine-binding site is contributed by T379.

The protein belongs to the class-II aminoacyl-tRNA synthetase family. Type-1 seryl-tRNA synthetase subfamily. As to quaternary structure, homodimer. The tRNA molecule binds across the dimer.

It is found in the cytoplasm. The enzyme catalyses tRNA(Ser) + L-serine + ATP = L-seryl-tRNA(Ser) + AMP + diphosphate + H(+). It catalyses the reaction tRNA(Sec) + L-serine + ATP = L-seryl-tRNA(Sec) + AMP + diphosphate + H(+). Its pathway is aminoacyl-tRNA biosynthesis; selenocysteinyl-tRNA(Sec) biosynthesis; L-seryl-tRNA(Sec) from L-serine and tRNA(Sec): step 1/1. Its function is as follows. Catalyzes the attachment of serine to tRNA(Ser). Is also able to aminoacylate tRNA(Sec) with serine, to form the misacylated tRNA L-seryl-tRNA(Sec), which will be further converted into selenocysteinyl-tRNA(Sec). The chain is Serine--tRNA ligase from Leifsonia xyli subsp. xyli (strain CTCB07).